A 101-amino-acid chain; its full sequence is Enhancer of yellow 2 transcription factor (101 aa).

It belongs to the ENY2 family. As to quaternary structure, component of the nuclear pore complex (NPC)-associated AMEX complex (anchoring and mRNA export complex), composed of at least e(y)2 and xmas-2. Component of the SAGA transcription coactivator-HAT complexes, at least composed of Ada2b, e(y)2, Pcaf/Gcn5, Taf10 and Nipped-A/Trrap. Within the SAGA complex, e(y)2, Sgf11, and not/nonstop form an additional subcomplex of SAGA called the DUB module (deubiquitination module). Component of the THO complex, composed of at least e(y)2, HPR1, THO2, THOC5, THOC6 and THOC7. Interacts with e(y)1. Interacts with su(Hw) (via zinc fingers). Interacts with xmas-2; required for localization to the nuclear periphery. Interacts with the nuclear pore complex (NPC).

The protein resides in the nucleus. It localises to the nucleoplasm. It is found in the cytoplasm. Functionally, involved in mRNA export coupled transcription activation by association with both the AMEX and the SAGA complexes. The SAGA complex is a multiprotein complex that activates transcription by remodeling chromatin and mediating histone acetylation and deubiquitination. Within the SAGA complex, participates in a subcomplex that specifically deubiquitinates histone H2B. The SAGA complex is recruited to specific gene promoters by activators, where it is required for transcription. Required for nuclear receptor-mediated transactivation. Involved in transcription elongation by recruiting the THO complex onto nascent mRNA. The AMEX complex functions in docking export-competent ribonucleoprotein particles (mRNPs) to the nuclear entrance of the nuclear pore complex (nuclear basket). AMEX participates in mRNA export and accurate chromatin positioning in the nucleus by tethering genes to the nuclear periphery. The sequence is that of Enhancer of yellow 2 transcription factor from Drosophila sechellia (Fruit fly).